Consider the following 882-residue polypeptide: MAAWSPSVGIGSCCLNNGITRTWKFPSARLFTGRKNKIKLGSETLMFTRKRFMGDLVTSALQSYQFSKICASKTSIELREALSSRRAEADDLKKVTSYSFRTKAGALVKVKVEKKREKYSILVYVSSLELSGDDKSRLVMVWGVYRSDSSCFLPLDFENSSQDSQTHTTETTFVKSSLSELMLGLEFDGKESPFYLSFHLKLVSGRDPDGQEMLTHRDTDFCIPVGFTAGHPLPLGLSSGPDDDSWNFSFFSRSSTNVVLCLYDDSTTDKPALELDLDPYVNRTGDVWHASVDNTWDFVRYGYRCKETAHSKEDVDVEGEPIVLDPYATVVGKSVSQKYLGSLSKSPSFDWGEDVSPNIPLEKLLVYRLNVKGFTQHRSSKLPSNVAGTFSGVAEKVSHLKTLGTNAVLLEPIFSFSEQKGPYFPFHFFSPMDIYGPSNSLESAVNSMKVMVKKLHSEGIEVLLEVVFTHTADSGALRGIDDSSYYYKGRANDLDSKSYLNCNYPVVQQLVLESLRYWVTEFHVDGFCFINASSLLRGVHGEQLSRPPLVEAIAFDPLLAETKLIADCWDPLEMMPKEVRFPHWKRWAELNTRYCRNVRNFLRGRGVLSDLATRICGSGDVFTDGRGPAFSFNYISRNSGLSLVDIVSFSGPELASELSWNCGEEGATNKSAVLQRRLKQIRNFLFIQYISLGVPVLNMGDECGISTRGSPLLESRKPFDWNLLASAFGTQITQFISFMTSVRARRSDVFQRRDFLKPENIVWYANDQTTPKWEDPASKFLALEIKSESEEEETASLAEPNEPKSNDLFIGFNASDHPESVVLPSLPDGSKWRRLVDTALPFPGFFSVEGETVVAEEPLQQLVVYEMKPYSCTLFETINTTA.

A chloroplast-targeting transit peptide spans 1–70 (MAAWSPSVGI…LQSYQFSKIC (70 aa)).

Belongs to the glycosyl hydrolase 13 family. As to quaternary structure, associates with ISA1 to form the heteromultimeric complex Iso1 required for amylopectin synthesis.

The protein localises to the plastid. Its subcellular location is the chloroplast. Its pathway is glycan biosynthesis; starch biosynthesis. In terms of biological role, involved in the trimming of pre-amylopectin chains. Accelerates the crystallization of nascent amylopectin molecules during starch synthesis. ISA1 and ISA2 work exclusively together as a multimeric holoenzyme. ISA1-ISA2 removes preferentially branches that are very close to other branches. The protein is Isoamylase 2, chloroplastic (ISA2) of Arabidopsis thaliana (Mouse-ear cress).